A 356-amino-acid chain; its full sequence is uncharacterized protein (356 aa).

It is found in the cytoplasm. The protein localises to the nucleus. This is an uncharacterized protein from Saccharomyces cerevisiae (strain ATCC 204508 / S288c) (Baker's yeast).